The chain runs to 268 residues: 4-hydroxy-tetrahydrodipicolinate reductase (268 aa).

NAD(+) is bound by residues 8–13 (GACGKM), D34, 95–97 (GTT), and 121–124 (APNF). H151 (proton donor/acceptor) is an active-site residue. H152 is a (S)-2,3,4,5-tetrahydrodipicolinate binding site. K155 serves as the catalytic Proton donor. 161–162 (GT) lines the (S)-2,3,4,5-tetrahydrodipicolinate pocket.

Belongs to the DapB family.

It localises to the cytoplasm. It catalyses the reaction (S)-2,3,4,5-tetrahydrodipicolinate + NAD(+) + H2O = (2S,4S)-4-hydroxy-2,3,4,5-tetrahydrodipicolinate + NADH + H(+). The catalysed reaction is (S)-2,3,4,5-tetrahydrodipicolinate + NADP(+) + H2O = (2S,4S)-4-hydroxy-2,3,4,5-tetrahydrodipicolinate + NADPH + H(+). Its pathway is amino-acid biosynthesis; L-lysine biosynthesis via DAP pathway; (S)-tetrahydrodipicolinate from L-aspartate: step 4/4. Catalyzes the conversion of 4-hydroxy-tetrahydrodipicolinate (HTPA) to tetrahydrodipicolinate. This is 4-hydroxy-tetrahydrodipicolinate reductase from Dictyoglomus turgidum (strain DSM 6724 / Z-1310).